The following is a 420-amino-acid chain: Threonine aspartase 1 (420 aa).

A disordered region spans residues 1–23; that stretch reads MTMEKGMSSGEGLPSRSSQVSAG. The Nucleophile role is filled by Thr234.

This sequence belongs to the Ntn-hydrolase family. In terms of assembly, intramolecular proteolysis generates 2 subunits, alpha and beta, which reassemble through a non-covalent association to form the fully active enzyme.

Functionally, protease responsible for KMT2A/MLL1 processing and activation. It also activates KMT2D/MLL2. Through substrate activation, it controls the expression of HOXA genes, and the expression of key cell cycle regulators including CCNA1, CCNB1, CCNE1 and CDKN2A. In Homo sapiens (Human), this protein is Threonine aspartase 1 (TASP1).